The chain runs to 893 residues: DNA mismatch repair protein MutS (893 aa).

637-644 (GPNMGGKS) contributes to the ATP binding site.

Belongs to the DNA mismatch repair MutS family.

This protein is involved in the repair of mismatches in DNA. It is possible that it carries out the mismatch recognition step. This protein has a weak ATPase activity. The chain is DNA mismatch repair protein MutS from Burkholderia thailandensis (strain ATCC 700388 / DSM 13276 / CCUG 48851 / CIP 106301 / E264).